Here is a 25-residue protein sequence, read N- to C-terminus: uncharacterized protein (25 aa).

This is an uncharacterized protein from Ornithodoros (relapsing fever ticks).